We begin with the raw amino-acid sequence, 437 residues long: Indole diterpene prenyltransferase anaPT (437 aa).

Positions 1 to 28 (MSPLSMQTDSVQGTAENKSLETNGTSND) are disordered. L-tryptophan contacts are provided by residues 102–103 (GF) and Glu-111. Dimethylallyl diphosphate contacts are provided by Arg-124, Lys-208, Tyr-210, Tyr-282, Gln-355, Tyr-357, Tyr-422, and Tyr-426.

The protein belongs to the tryptophan dimethylallyltransferase family.

The catalysed reaction is (R)-benzodiazepinedione + dimethylallyl diphosphate = (2R,3S,11R)-aszonalenin + diphosphate. The enzyme catalyses (S)-benzodiazepinedione + dimethylallyl diphosphate = (2R,3S,11S)-aszonalenin + diphosphate. It participates in alkaloid biosynthesis. Its function is as follows. Indole diterpene prenyltransferase; part of the gene cluster that mediates the biosynthesis of the prenylated pyrroloindoline diketopiperazine acetylaszonalenin. The first step in the pathway is the formation of (R)-benzodiazepinedione by condensation of tryptophan and anthranilic acid catalyzed by the non-ribosomal peptide synthetase anaPS. The prenyltransferase anaPT then converts (R)-benzodiazepinedione to aszonalenin in the presence of dimethylallyl diphosphate (DMAPP) via C3-prenylation. The last step in the biosynthesis of acetylaszonalenin via acetylation of aszonalenin at position N1 catalyzed by anaAT. The protein is Indole diterpene prenyltransferase anaPT of Neosartorya fischeri (strain ATCC 1020 / DSM 3700 / CBS 544.65 / FGSC A1164 / JCM 1740 / NRRL 181 / WB 181) (Aspergillus fischerianus).